The primary structure comprises 207 residues: uncharacterized protein (207 aa).

The protein belongs to the flavoredoxin family. The cofactor is FMN.

This is an uncharacterized protein from Bacillus subtilis (strain 168).